We begin with the raw amino-acid sequence, 341 residues long: MAEFFATNLWPLIIVIGQSVLLLVLLLISIAYILLADRKIWAAVQLRRGPNVVGPWGLLQSFADLLKFVVKEPTVPSGANKGVFLLAPLVTCVLALAAWAVIPVNAGWVIADINVGVLYILAVSSLSVYGIIMAGWSSNSKYPFLAALRSAAQMVSYEVSIGFVVICVLLCVGSLNLTAIVEAQNSQWGMLGWYWLPLFPMFVVFYVSALAETNRPPFDLVEAESELVAGFMVEYSSTPYLLFMLGEYVAIVTMCAMGTILFLGGWLPPVPYAPFTWVPGIVWFALKVLFMFFLFAMAKAIVPRYRYDQLMRLGWKVFLPLSLAMVVIVAAVLQFAGLAPK.

8 consecutive transmembrane segments (helical) span residues 13-33 (IIVI…IAYI), 82-102 (GVFL…WAVI), 115-135 (VGVL…IMAG), 161-181 (IGFV…TAIV), 190-210 (MLGW…VSAL), 248-268 (YVAI…GWLP), 277-297 (WVPG…LFAM), and 317-337 (VFLP…QFAG).

This sequence belongs to the complex I subunit 1 family. NDH-1 is composed of 14 different subunits. Subunits NuoA, H, J, K, L, M, N constitute the membrane sector of the complex.

It localises to the cell inner membrane. It catalyses the reaction a quinone + NADH + 5 H(+)(in) = a quinol + NAD(+) + 4 H(+)(out). NDH-1 shuttles electrons from NADH, via FMN and iron-sulfur (Fe-S) centers, to quinones in the respiratory chain. The immediate electron acceptor for the enzyme in this species is believed to be ubiquinone. Couples the redox reaction to proton translocation (for every two electrons transferred, four hydrogen ions are translocated across the cytoplasmic membrane), and thus conserves the redox energy in a proton gradient. This subunit may bind ubiquinone. This chain is NADH-quinone oxidoreductase subunit H 2, found in Rhodopseudomonas palustris (strain BisB5).